The sequence spans 211 residues: N-(5'-phosphoribosyl)anthranilate isomerase (211 aa).

Belongs to the TrpF family.

It carries out the reaction N-(5-phospho-beta-D-ribosyl)anthranilate = 1-(2-carboxyphenylamino)-1-deoxy-D-ribulose 5-phosphate. The protein operates within amino-acid biosynthesis; L-tryptophan biosynthesis; L-tryptophan from chorismate: step 3/5. The chain is N-(5'-phosphoribosyl)anthranilate isomerase from Nitrosomonas europaea (strain ATCC 19718 / CIP 103999 / KCTC 2705 / NBRC 14298).